Consider the following 289-residue polypeptide: ATP synthase gamma chain (289 aa).

Belongs to the ATPase gamma chain family. As to quaternary structure, F-type ATPases have 2 components, CF(1) - the catalytic core - and CF(0) - the membrane proton channel. CF(1) has five subunits: alpha(3), beta(3), gamma(1), delta(1), epsilon(1). CF(0) has three main subunits: a, b and c.

The protein localises to the cell membrane. Its function is as follows. Produces ATP from ADP in the presence of a proton gradient across the membrane. The gamma chain is believed to be important in regulating ATPase activity and the flow of protons through the CF(0) complex. The chain is ATP synthase gamma chain from Lactococcus lactis subsp. cremoris (strain SK11).